The sequence spans 242 residues: ATP synthase subunit b (242 aa).

Helical transmembrane passes span 8 to 28 (VLPF…ASAP) and 87 to 107 (LMDL…LIKF).

The protein belongs to the ATPase B chain family. F-type ATPases have 2 components, F(1) - the catalytic core - and F(0) - the membrane proton channel. F(1) has five subunits: alpha(3), beta(3), gamma(1), delta(1), epsilon(1). F(0) has three main subunits: a(1), b(2) and c(10-14). The alpha and beta chains form an alternating ring which encloses part of the gamma chain. F(1) is attached to F(0) by a central stalk formed by the gamma and epsilon chains, while a peripheral stalk is formed by the delta and b chains.

It localises to the cell inner membrane. In terms of biological role, f(1)F(0) ATP synthase produces ATP from ADP in the presence of a proton or sodium gradient. F-type ATPases consist of two structural domains, F(1) containing the extramembraneous catalytic core and F(0) containing the membrane proton channel, linked together by a central stalk and a peripheral stalk. During catalysis, ATP synthesis in the catalytic domain of F(1) is coupled via a rotary mechanism of the central stalk subunits to proton translocation. Its function is as follows. Component of the F(0) channel, it forms part of the peripheral stalk, linking F(1) to F(0). The protein is ATP synthase subunit b of Desulfotalea psychrophila (strain LSv54 / DSM 12343).